Consider the following 24-residue polypeptide: uncharacterized protein (24 aa).

This is an uncharacterized protein from Schizosaccharomyces pombe (strain 972 / ATCC 24843) (Fission yeast).